A 291-amino-acid chain; its full sequence is Beta-lactamase CTX-M-6 (291 aa).

A signal peptide spans 1-28 (MMTQSIRRSMLTVMATLPLLFSSATLHA). S73 functions as the Acyl-ester intermediate in the catalytic mechanism. 237 to 239 (KTG) contacts substrate.

Belongs to the class-A beta-lactamase family.

The enzyme catalyses a beta-lactam + H2O = a substituted beta-amino acid. Has cefotaxime-hydrolyzing activity. This Salmonella typhimurium protein is Beta-lactamase CTX-M-6 (bla).